The following is an 864-amino-acid chain: DNA mismatch repair protein MutS (864 aa).

623–630 (GPNMGGKS) is a binding site for ATP.

This sequence belongs to the DNA mismatch repair MutS family.

Its function is as follows. This protein is involved in the repair of mismatches in DNA. It is possible that it carries out the mismatch recognition step. This protein has a weak ATPase activity. This chain is DNA mismatch repair protein MutS, found in Polaromonas sp. (strain JS666 / ATCC BAA-500).